Consider the following 277-residue polypeptide: MEPKAFVEIMRPHNCILAGIVGILGSLVAYEGIPPVQKLILIFLVVYFGCSAGNTINDYFDVEIDKINRPNRPIPRGAITRKAAFYYGVLQYFIGLIIALLLGWSAFLFALGAYFLTFVYAWKLKPLPFIGNVTVALLTAATPIYGAVGVGRIDLAGYLAICAFLVNVSREIMKDIEDFEGDKRLGARTLPIMIGKKKSGIIASIFGFLTIISSFLPVKVGIGLGYLPIIIVDIMIAKASIDVLVNPEKAGKGQKILKFATFIAVISFLLGALTREV.

8 consecutive transmembrane segments (helical) span residues 16–36 (ILAG…IPPV), 40–60 (ILIF…NDYF), 93–113 (FIGL…ALGA), 129–149 (FIGN…GAVG), 153–173 (IDLA…REIM), 199–218 (SGII…FLPV), 222–244 (IGLG…IDVL), and 253–273 (GQKI…LGAL).

Belongs to the UbiA prenyltransferase family. DGGGP synthase subfamily. Mg(2+) is required as a cofactor.

It localises to the cell membrane. The enzyme catalyses sn-3-O-(geranylgeranyl)glycerol 1-phosphate + (2E,6E,10E)-geranylgeranyl diphosphate = 2,3-bis-O-(geranylgeranyl)-sn-glycerol 1-phosphate + diphosphate. It functions in the pathway membrane lipid metabolism; glycerophospholipid metabolism. Functionally, prenyltransferase that catalyzes the transfer of the geranylgeranyl moiety of geranylgeranyl diphosphate (GGPP) to the C2 hydroxyl of (S)-3-O-geranylgeranylglyceryl phosphate (GGGP). This reaction is the second ether-bond-formation step in the biosynthesis of archaeal membrane lipids. This is Digeranylgeranylglyceryl phosphate synthase from Pyrococcus horikoshii (strain ATCC 700860 / DSM 12428 / JCM 9974 / NBRC 100139 / OT-3).